The primary structure comprises 416 residues: Solute carrier family 35 member D3 (416 aa).

10 helical membrane passes run 9-29 (VLGI…NILL), 38-58 (FSFL…SLEL), 64-84 (LIAV…VAVL), 103-123 (MYVV…VLVL), 131-151 (GVLA…AGDL), 155-175 (PIGY…LVLI), 187-207 (LTAQ…CSFA), 224-244 (AMVC…FTTL), 257-277 (FVGV…FSDV), and 280-300 (TSLF…YCVA). Residues 334 to 384 (MEELPGEGGNGRSEGGEAAGGPAQESRQEVRGSPRGVPLVAGSSEEGSRRS) are disordered. Residues 339–352 (GEGGNGRSEGGEAA) show a composition bias toward gly residues.

It belongs to the TPT transporter family. SLC35D subfamily. Could interact with ATG14, BECN1 and PIK3C3 that form the PI3KC3-C1/AIC/autophagy initiation complex; enhancing the formation of the AIC and promoting autophagy.

The protein localises to the cytoplasmic vesicle. The protein resides in the secretory vesicle. Its subcellular location is the synaptic vesicle membrane. It localises to the early endosome membrane. It is found in the endoplasmic reticulum membrane. The enzyme catalyses UDP-alpha-D-glucose(in) = UDP-alpha-D-glucose(out). With respect to regulation, inhibited by proton uncouplers that directly abolish the proton electrochemical gradient. Probable UDP-glucose transmembrane transporter involved in UDP-glucose transport from the cytosol to the lumen of synaptic vesicles. It is involved in platelet dense granules maturation. Functionally, alternatively, could function as a molecular adapter enhancing the formation of the PI3KC3-C1/AIC/autophagy initiation complex to promote autophagy in dopaminergic neurons. Could also regulate the plasma membrane localization of the D(1A) dopamine receptor/DRD1 and dopamine signaling. The chain is Solute carrier family 35 member D3 from Homo sapiens (Human).